The primary structure comprises 243 residues: 4-hydroxy-tetrahydrodipicolinate reductase (243 aa).

NAD(+) is bound by residues 9–14 (GANGKM), 78–80 (GTS), and 104–107 (APNF). The active-site Proton donor/acceptor is the His-134. A (S)-2,3,4,5-tetrahydrodipicolinate-binding site is contributed by His-135. Catalysis depends on Lys-138, which acts as the Proton donor. 144 to 145 (GT) is a binding site for (S)-2,3,4,5-tetrahydrodipicolinate.

This sequence belongs to the DapB family.

It localises to the cytoplasm. The enzyme catalyses (S)-2,3,4,5-tetrahydrodipicolinate + NAD(+) + H2O = (2S,4S)-4-hydroxy-2,3,4,5-tetrahydrodipicolinate + NADH + H(+). It catalyses the reaction (S)-2,3,4,5-tetrahydrodipicolinate + NADP(+) + H2O = (2S,4S)-4-hydroxy-2,3,4,5-tetrahydrodipicolinate + NADPH + H(+). It functions in the pathway amino-acid biosynthesis; L-lysine biosynthesis via DAP pathway; (S)-tetrahydrodipicolinate from L-aspartate: step 4/4. Functionally, catalyzes the conversion of 4-hydroxy-tetrahydrodipicolinate (HTPA) to tetrahydrodipicolinate. The polypeptide is 4-hydroxy-tetrahydrodipicolinate reductase (Legionella pneumophila (strain Corby)).